The chain runs to 380 residues: MAAVNWLKDEPYPEKPTRRNHLSFGPARLPTGDWDWIMTYYKPEAREWLRTMNNPLWSGPEDVLGLLPAGVPVTEKIFVKEVYPGLKGFLQMFIPVKVAGCLLFGFSPLSRTGMATLKTAPVFRGGYAPAAPGIPMQVYAWEMACKIDAAPRLFKWELIVGEYFVRLATLSECSAGGDVGAYIRGGRPISIEAAAVKTRELASTLYLLAQNNVYHGDVKIANTVITEPHGRLGLIDFEMAHPLDMTMSGLREGLEVPIKWDMVCTDEYRAPEGHGPFPDILSAEAQLVWQVGLFMLDVIGIEIIENRNQGLWEQPDFPGLAAREVGIGRSLLACEHRAFLDYLTIARGCLRTNPRERPRLTLLIAQLTKFIREVATQPEH.

One can recognise a Protein kinase domain in the interval 93–371 (FIPVKVAGCL…LLIAQLTKFI (279 aa)). ATP is bound at residue Lys118. Asp217 (proton acceptor) is an active-site residue.

The protein belongs to the protein kinase superfamily. Ser/Thr protein kinase family.

The enzyme catalyses L-seryl-[protein] + ATP = O-phospho-L-seryl-[protein] + ADP + H(+). The catalysed reaction is L-threonyl-[protein] + ATP = O-phospho-L-threonyl-[protein] + ADP + H(+). In Ictalurid herpesvirus 1 (strain Auburn) (IcHV-1), this protein is Protein kinase ORF15 (ORF15).